We begin with the raw amino-acid sequence, 500 residues long: Hepatic triacylglycerol lipase (500 aa).

A signal peptide spans 1 to 21 (MENPLCVSIFLFYCILIQSSA). Positions 23–44 (GQSLGPESFGRRSRAAETNKTP) are disordered. Residues Asn67 and Asn78 are each glycosylated (N-linked (GlcNAc...) asparagine). Residue Ser168 is the Nucleophile of the active site. Residue Asp194 is the Charge relay system of the active site. The interval 254–277 (CHFLELYKHFAKHGLNAITRTVKC) is essential for determining substrate specificity. The Charge relay system role is filled by His279. The PLAT domain occupies 353-487 (YHYQFKIRFI…HPAREKTFVR (135 aa)). N-linked (GlcNAc...) asparagine glycosylation is found at Asn363 and Asn398.

Belongs to the AB hydrolase superfamily. Lipase family. Homodimer.

It is found in the secreted. The enzyme catalyses a triacylglycerol + H2O = a diacylglycerol + a fatty acid + H(+). It carries out the reaction a 1-acyl-sn-glycero-3-phosphocholine + H2O = sn-glycerol 3-phosphocholine + a fatty acid + H(+). It catalyses the reaction a 1,2-diacyl-sn-glycero-3-phosphocholine + H2O = a 2-acyl-sn-glycero-3-phosphocholine + a fatty acid + H(+). The catalysed reaction is 1,2,3-tri-(9Z-octadecenoyl)-glycerol + H2O = di-(9Z)-octadecenoylglycerol + (9Z)-octadecenoate + H(+). The enzyme catalyses 1,2-di-(9Z-octadecenoyl)-sn-glycero-3-phosphocholine + H2O = (9Z-octadecenoyl)-sn-glycero-3-phosphocholine + (9Z)-octadecenoate + H(+). It carries out the reaction 1,2,3-tributanoylglycerol + H2O = dibutanoylglycerol + butanoate + H(+). It catalyses the reaction 1,2-dihexadecanoyl-sn-glycero-3-phosphocholine + H2O = hexadecanoyl-sn-glycero-3-phosphocholine + hexadecanoate + H(+). The catalysed reaction is 1,2-di-(9Z-octadecenoyl)-sn-glycerol + H2O = 2-(9Z-octadecenoyl)-glycerol + (9Z)-octadecenoate + H(+). The enzyme catalyses 1,2,3-tri-(9Z-octadecenoyl)-glycerol + H2O = 2,3-di-(9Z)-octadecenoyl-sn-glycerol + (9Z)-octadecenoate + H(+). It carries out the reaction 1-(9Z-octadecenoyl)-sn-glycero-3-phospho-L-serine + H2O = sn-glycero-3-phospho-L-serine + (9Z)-octadecenoate + H(+). It catalyses the reaction 1-hexadecanoyl-sn-glycero-3-phosphocholine + H2O = sn-glycerol 3-phosphocholine + hexadecanoate + H(+). The catalysed reaction is 1,3-di-(9Z-octadecenoyl)-glycerol + H2O = 3-(9Z-octadecenoyl)-sn-glycerol + (9Z)-octadecenoate + H(+). In terms of biological role, catalyzes the hydrolysis of triglycerides and phospholipids present in circulating plasma lipoproteins, including chylomicrons, intermediate density lipoproteins (IDL), low density lipoproteins (LDL) of large size and high density lipoproteins (HDL), releasing free fatty acids (FFA) and smaller lipoprotein particles. Also exhibits lysophospholipase activity. Can hydrolyze both neutral lipid and phospholipid substrates but shows a greater binding affinity for neutral lipid substrates than phospholipid substrates. In native LDL, preferentially hydrolyzes the phosphatidylcholine species containing polyunsaturated fatty acids at sn-2 position. The sequence is that of Hepatic triacylglycerol lipase (LIPC) from Bos taurus (Bovine).